A 235-amino-acid polypeptide reads, in one-letter code: Segregation and condensation protein A (235 aa).

Belongs to the ScpA family. Component of a cohesin-like complex composed of ScpA, ScpB and the Smc homodimer, in which ScpA and ScpB bind to the head domain of Smc. The presence of the three proteins is required for the association of the complex with DNA.

The protein resides in the cytoplasm. Functionally, participates in chromosomal partition during cell division. May act via the formation of a condensin-like complex containing Smc and ScpB that pull DNA away from mid-cell into both cell halves. This Streptococcus equi subsp. zooepidemicus (strain H70) protein is Segregation and condensation protein A.